The sequence spans 210 residues: High frequency lysogenization protein HflD homolog (210 aa).

Residues 103–130 (EAKAKLAERLQQIERQLPLYENDIMADQ) are a coiled coil.

Belongs to the HflD family.

It localises to the cytoplasm. The protein resides in the cell inner membrane. This Actinobacillus pleuropneumoniae serotype 3 (strain JL03) protein is High frequency lysogenization protein HflD homolog.